We begin with the raw amino-acid sequence, 500 residues long: Trehalose-6-phosphate synthase (500 aa).

R28 provides a ligand contact to D-glucose 6-phosphate. 48 to 49 (GG) contacts UDP-alpha-D-glucose. D-glucose 6-phosphate-binding residues include Y104 and D158. UDP-alpha-D-glucose is bound by residues R300 and K305. Position 338 (R338) interacts with D-glucose 6-phosphate. A UDP-alpha-D-glucose-binding site is contributed by 403–407 (LVAKE).

Belongs to the glycosyltransferase 20 family. In terms of assembly, homotetramer.

The enzyme catalyses ADP-alpha-D-glucose + D-glucose 6-phosphate = alpha,alpha-trehalose 6-phosphate + ADP + H(+). The catalysed reaction is CDP-alpha-D-glucose + D-glucose 6-phosphate = alpha,alpha-trehalose 6-phosphate + CDP + H(+). It catalyses the reaction GDP-alpha-D-glucose + D-glucose 6-phosphate = alpha,alpha-trehalose 6-phosphate + GDP + H(+). It carries out the reaction TDP-alpha-D-glucose + D-glucose 6-phosphate = 5-methyl-UDP + alpha,alpha-trehalose 6-phosphate + H(+). The enzyme catalyses D-glucose 6-phosphate + UDP-alpha-D-glucose = alpha,alpha-trehalose 6-phosphate + UDP + H(+). Its pathway is glycan biosynthesis; trehalose biosynthesis. Functionally, probably involved in the osmoprotection via the biosynthesis of trehalose and in the production of glycogen and alpha-glucan via the TreS-Pep2 branch involved in the biosynthesis of maltose-1-phosphate (M1P). Catalyzes the transfer of glucose from UDP-glucose (UDP-Glc) to D-glucose 6-phosphate (Glc-6-P) to form trehalose-6-phosphate. Probably also able to use ADP-Glc, CDP-Glc, GDP-Glc and TDP-Glc as glucosyl donors. This chain is Trehalose-6-phosphate synthase, found in Mycobacterium ulcerans (strain Agy99).